Reading from the N-terminus, the 499-residue chain is Ubiquitin carboxyl-terminal hydrolase 16 (499 aa).

One can recognise a USP domain in the interval 53–497 (VGLINRGNDC…YAYMLYYERV (445 aa)). Cys-62 acts as the Nucleophile in catalysis. Residue His-407 is the Proton acceptor of the active site.

Belongs to the peptidase C19 family.

The enzyme catalyses Thiol-dependent hydrolysis of ester, thioester, amide, peptide and isopeptide bonds formed by the C-terminal Gly of ubiquitin (a 76-residue protein attached to proteins as an intracellular targeting signal).. The protein is Ubiquitin carboxyl-terminal hydrolase 16 (UBP16) of Saccharomyces cerevisiae (strain ATCC 204508 / S288c) (Baker's yeast).